Consider the following 562-residue polypeptide: Protein FAM222B (562 aa).

Composition is skewed to low complexity over residues 155-167 and 183-201; these read QQALQHAQTLAHA and ALSHPQSLQQPQGLGHPQP. 3 disordered regions span residues 155–203, 219–245, and 537–562; these read QQAL…QPMA, LQHPHNPLLHGGRKMPDSDAPPNVTVS, and AHRAPGNRAPDPTESRSLHIQHPGYR.

This sequence belongs to the FAM222 family.

The sequence is that of Protein FAM222B (FAM222B) from Homo sapiens (Human).